The sequence spans 94 residues: ESAT-6-like protein EsxL (94 aa).

Belongs to the WXG100 family. ESAT-6 subfamily. In terms of assembly, strongly interacts with EsxK to form a heterodimeric complex under reducing conditions.

It is found in the secreted. This is ESAT-6-like protein EsxL from Mycobacterium bovis (strain ATCC BAA-935 / AF2122/97).